We begin with the raw amino-acid sequence, 536 residues long: Arylsulfatase (536 aa).

3 residues coordinate Ca(2+): D13, D14, and C51. The Nucleophile role is filled by C51. A 3-oxoalanine (Cys) modification is found at C51. H115 is a catalytic residue. Ca(2+)-binding residues include D317 and N318.

Belongs to the sulfatase family. As to quaternary structure, monomer. The cofactor is Ca(2+). In terms of processing, the conversion to 3-oxoalanine (also known as C-formylglycine, FGly), of a serine or cysteine residue in prokaryotes and of a cysteine residue in eukaryotes, is critical for catalytic activity.

The protein localises to the cytoplasm. It carries out the reaction an aryl sulfate + H2O = a phenol + sulfate + H(+). Hydrolyzes the bond between sulfate and the aromatic ring in a compound such as 4-nitrocatechol sulfate. The protein is Arylsulfatase (atsA) of Pseudomonas aeruginosa (strain ATCC 15692 / DSM 22644 / CIP 104116 / JCM 14847 / LMG 12228 / 1C / PRS 101 / PAO1).